We begin with the raw amino-acid sequence, 236 residues long: Peptidase E (236 aa).

Active-site charge relay system residues include Ser-122, Asp-137, and His-159.

This sequence belongs to the peptidase S51 family.

It localises to the cytoplasm. It catalyses the reaction Dipeptidase E catalyzes the hydrolysis of dipeptides Asp-|-Xaa. It does not act on peptides with N-terminal Glu, Asn or Gln, nor does it cleave isoaspartyl peptides.. Hydrolyzes dipeptides containing N-terminal aspartate residues. May play a role in allowing the cell to use peptide aspartate to spare carbon otherwise required for the synthesis of the aspartate family of amino acids. The sequence is that of Peptidase E from Shewanella sp. (strain W3-18-1).